Here is a 493-residue protein sequence, read N- to C-terminus: MSELTALTIAEARDKLKAKAITATELTDAYLSAIDSANETINAYVKVTHDQARSMAKASDERIAKGEAGALEGIPLGVKDLFATKGVHTQACSHILDGFKPEYESTVTANLWADGAVMLGKLNMDEFAMGSSNETSYYGSVKNPWRANGSNADLVPGGSSGGSAAAVAAQLCAGATATDTGGSIRQPAAFTGTVGIKPTYGRVSRWGTVAFASSLDQAGPIARDVRDAAILLKSMASLDLKDTTSVDLPIPDYEAAIGKSLKGMKIGIPKEYRVDGMPDEIEELWQKGIQYLKDAGAEIIDISLPNTKYALPAYYIVAPAEASSNLARYDGVRYGLRVPGKDIADMYEQTRAAGFGKEVKRRIMIGTYVLSAGYYDAYYLRAQKVRTLIKKDFEDVFAKGVHAILTPATPSAAFGLADEDLANDPVKMYLNDIFTVTVNMAGLPGIAVPAGINDKGLPLGLQLIGRPFEEETLFQAAHAIEQAAGRFTPAKWW.

Residues Lys-79 and Ser-159 each act as charge relay system in the active site. Ser-183 functions as the Acyl-ester intermediate in the catalytic mechanism.

This sequence belongs to the amidase family. GatA subfamily. Heterotrimer of A, B and C subunits.

It catalyses the reaction L-glutamyl-tRNA(Gln) + L-glutamine + ATP + H2O = L-glutaminyl-tRNA(Gln) + L-glutamate + ADP + phosphate + H(+). Its function is as follows. Allows the formation of correctly charged Gln-tRNA(Gln) through the transamidation of misacylated Glu-tRNA(Gln) in organisms which lack glutaminyl-tRNA synthetase. The reaction takes place in the presence of glutamine and ATP through an activated gamma-phospho-Glu-tRNA(Gln). The chain is Glutamyl-tRNA(Gln) amidotransferase subunit A from Brucella anthropi (strain ATCC 49188 / DSM 6882 / CCUG 24695 / JCM 21032 / LMG 3331 / NBRC 15819 / NCTC 12168 / Alc 37) (Ochrobactrum anthropi).